Here is a 90-residue protein sequence, read N- to C-terminus: Probable small nuclear ribonucleoprotein F (90 aa).

The Sm domain maps to 7-80 (NPRPFLQDLV…VLYIKKADEA (74 aa)).

It belongs to the snRNP Sm proteins family. SmF/LSm6 subfamily.

It localises to the nucleus. The protein resides in the cytoplasm. In terms of biological role, plays a role in pre-mRNA splicing as a core component of the spliceosomal U1, U2, U4 and U5 small nuclear ribonucleoproteins (snRNPs), the building blocks of the spliceosome. In Neurospora crassa (strain ATCC 24698 / 74-OR23-1A / CBS 708.71 / DSM 1257 / FGSC 987), this protein is Probable small nuclear ribonucleoprotein F.